A 132-amino-acid polypeptide reads, in one-letter code: Small ribosomal subunit protein uS8 (132 aa).

This sequence belongs to the universal ribosomal protein uS8 family. As to quaternary structure, part of the 30S ribosomal subunit. Contacts proteins S5 and S12.

In terms of biological role, one of the primary rRNA binding proteins, it binds directly to 16S rRNA central domain where it helps coordinate assembly of the platform of the 30S subunit. In Corynebacterium kroppenstedtii (strain DSM 44385 / JCM 11950 / CIP 105744 / CCUG 35717), this protein is Small ribosomal subunit protein uS8.